The following is a 362-amino-acid chain: Phosphoserine aminotransferase (362 aa).

Position 43 (Arg-43) interacts with L-glutamate. Residues 77 to 78, Trp-103, Thr-153, Asp-173, and Gln-196 each bind pyridoxal 5'-phosphate; that span reads AR. Lys-197 bears the N6-(pyridoxal phosphate)lysine mark.

This sequence belongs to the class-V pyridoxal-phosphate-dependent aminotransferase family. SerC subfamily. In terms of assembly, homodimer. It depends on pyridoxal 5'-phosphate as a cofactor.

The protein resides in the cytoplasm. It carries out the reaction O-phospho-L-serine + 2-oxoglutarate = 3-phosphooxypyruvate + L-glutamate. The catalysed reaction is 4-(phosphooxy)-L-threonine + 2-oxoglutarate = (R)-3-hydroxy-2-oxo-4-phosphooxybutanoate + L-glutamate. Its pathway is amino-acid biosynthesis; L-serine biosynthesis; L-serine from 3-phospho-D-glycerate: step 2/3. The protein operates within cofactor biosynthesis; pyridoxine 5'-phosphate biosynthesis; pyridoxine 5'-phosphate from D-erythrose 4-phosphate: step 3/5. Functionally, catalyzes the reversible conversion of 3-phosphohydroxypyruvate to phosphoserine and of 3-hydroxy-2-oxo-4-phosphonooxybutanoate to phosphohydroxythreonine. This chain is Phosphoserine aminotransferase, found in Legionella pneumophila (strain Lens).